Here is a 270-residue protein sequence, read N- to C-terminus: Alpha N-terminal protein methyltransferase 1 (270 aa).

Residues Gly114, Arg119, 137–139, 165–166, and Gln180 contribute to the S-adenosyl-L-methionine site; these read EQN and LQ.

The protein belongs to the methyltransferase superfamily. NTM1 family.

It carries out the reaction N-terminal L-alanyl-L-prolyl-L-lysyl-[protein] + 3 S-adenosyl-L-methionine = N-terminal N,N,N-trimethyl-L-alanyl-L-prolyl-L-lysyl-[protein] + 3 S-adenosyl-L-homocysteine + 3 H(+). The enzyme catalyses N-terminal L-seryl-L-prolyl-L-lysyl-[protein] + 3 S-adenosyl-L-methionine = N-terminal N,N,N-trimethyl-L-seryl-L-prolyl-L-lysyl-[protein] + 3 S-adenosyl-L-homocysteine + 3 H(+). It catalyses the reaction N-terminal L-prolyl-L-prolyl-L-lysyl-[protein] + 2 S-adenosyl-L-methionine = N-terminal N,N-dimethyl-L-prolyl-L-prolyl-L-lysyl-[protein] + 2 S-adenosyl-L-homocysteine + 2 H(+). Its function is as follows. Alpha-N-methyltransferase that methylates the N-terminus of target proteins containing the N-terminal motif [Ala/Pro/Ser]-Pro-Lys when the initiator Met is cleaved. Specifically catalyzes mono-, di- or tri-methylation of exposed alpha-amino group of Ala or Ser residue in the [Ala/Ser]-Pro-Lys motif and mono- or di-methylation of Pro in the Pro-Pro-Lys motif. This is Alpha N-terminal protein methyltransferase 1 from Dictyostelium discoideum (Social amoeba).